The primary structure comprises 164 residues: UPF0304 protein PM1500 (164 aa).

It belongs to the UPF0304 family.

The sequence is that of UPF0304 protein PM1500 from Pasteurella multocida (strain Pm70).